We begin with the raw amino-acid sequence, 258 residues long: Global transcriptional regulator CodY (258 aa).

Positions 1-156 are GAF domain; it reads MSTLLSKTRR…SATIVGMELL (156 aa). Residues 204 to 223 constitute a DNA-binding region (H-T-H motif); that stretch reads ASKIADKVGITRSVIVNALR.

It belongs to the CodY family.

The protein resides in the cytoplasm. Its function is as follows. DNA-binding global transcriptional regulator which is involved in the adaptive response to starvation and acts by directly or indirectly controlling the expression of numerous genes in response to nutrient availability. During rapid exponential growth, CodY is highly active and represses genes whose products allow adaptation to nutrient depletion. In Clostridium perfringens (strain SM101 / Type A), this protein is Global transcriptional regulator CodY.